Reading from the N-terminus, the 156-residue chain is Ribosomal RNA large subunit methyltransferase H (156 aa).

S-adenosyl-L-methionine-binding positions include L73, G104, and 123-128; that span reads LSSLTL.

Belongs to the RNA methyltransferase RlmH family. Homodimer.

It localises to the cytoplasm. It carries out the reaction pseudouridine(1915) in 23S rRNA + S-adenosyl-L-methionine = N(3)-methylpseudouridine(1915) in 23S rRNA + S-adenosyl-L-homocysteine + H(+). Its function is as follows. Specifically methylates the pseudouridine at position 1915 (m3Psi1915) in 23S rRNA. This Bordetella avium (strain 197N) protein is Ribosomal RNA large subunit methyltransferase H.